The primary structure comprises 225 residues: Protein LiaH (225 aa).

Coiled-coil stretches lie at residues 58–151 and 161–182; these read KKYE…KEHM and ESAY…IRAN.

This sequence belongs to the PspA/Vipp/IM30 family.

The chain is Protein LiaH (liaH) from Bacillus subtilis (strain 168).